We begin with the raw amino-acid sequence, 382 residues long: Na(+)/H(+) antiporter NhaA (382 aa).

11 consecutive transmembrane segments (helical) span residues 14-34 (AGGI…NSSL), 49-69 (MSVS…LIGL), 87-107 (IFPA…YVAF), 117-137 (GWAI…ALLG), 146-166 (VFLL…IAFF), 171-191 (LSVL…LLNA), 205-225 (FILW…GVVL), 252-272 (VAFA…LEGV), 285-305 (VALG…YLAV), 321-341 (IFAV…ISSL), and 356-376 (LGIL…LSIS).

The protein belongs to the NhaA Na(+)/H(+) (TC 2.A.33) antiporter family.

The protein resides in the cell inner membrane. It catalyses the reaction Na(+)(in) + 2 H(+)(out) = Na(+)(out) + 2 H(+)(in). Its function is as follows. Na(+)/H(+) antiporter that extrudes sodium in exchange for external protons. This is Na(+)/H(+) antiporter NhaA from Aliivibrio fischeri (strain ATCC 700601 / ES114) (Vibrio fischeri).